A 486-amino-acid polypeptide reads, in one-letter code: V-type proton ATPase subunit B1 (486 aa).

Position 2 is an N-acetylglycine (glycine 2).

Belongs to the ATPase alpha/beta chains family. As to quaternary structure, V-ATPase is a heteromultimeric enzyme composed of a peripheral catalytic V1 complex (components A to H) attached to an integral membrane V0 proton pore complex (components: a, c, c'', d and e).

The protein resides in the vacuole membrane. Functionally, non-catalytic subunit of the peripheral V1 complex of vacuolar ATPase. V-ATPase is responsible for acidifying a variety of intracellular compartments in eukaryotic cells. The chain is V-type proton ATPase subunit B1 (VHA-B1) from Arabidopsis thaliana (Mouse-ear cress).